A 919-amino-acid chain; its full sequence is DNA double-strand break repair Rad50 ATPase (919 aa).

ATP contacts are provided by residues 33-39 (NGAGKST) and Q143. Coiled coils occupy residues 208-268 (MTLR…MLVN), 315-379 (HEVA…RRYT), and 414-458 (ESVL…LEES). A Zinc-hook domain is found at 417 to 516 (LERLDAVIND…EASRLQDKRR (100 aa)). 2 residues coordinate Zn(2+): C464 and C467. 3 coiled-coil regions span residues 486–515 (EAER…QDKR), 541–595 (EDLA…LQRL), and 635–749 (AYRS…RKAS).

It belongs to the SMC family. RAD50 subfamily. Homodimer. Forms a heterotetramer composed of two Mre11 subunits and two Rad50 subunits. Requires Zn(2+) as cofactor.

Part of the Rad50/Mre11 complex, which is involved in the early steps of DNA double-strand break (DSB) repair. The complex may facilitate opening of the processed DNA ends to aid in the recruitment of HerA and NurA. Rad50 controls the balance between DNA end bridging and DNA resection via ATP-dependent structural rearrangements of the Rad50/Mre11 complex. The chain is DNA double-strand break repair Rad50 ATPase from Aeropyrum pernix (strain ATCC 700893 / DSM 11879 / JCM 9820 / NBRC 100138 / K1).